Here is a 377-residue protein sequence, read N- to C-terminus: RING-H2 finger protein ATL22 (377 aa).

The N-terminal stretch at 1–23 (MTSKLLPLLLNLIFLFFFPLLNA) is a signal peptide. The helical transmembrane segment at 244-264 (IMCLSLVGPLTALTFCVGLVM) threads the bilayer. Residues 327 to 369 (CPICLSEYATKETVRCLPECEHCFHTECIDAWLKLHSSCPVCR) form an RING-type; atypical zinc finger.

It belongs to the RING-type zinc finger family. ATL subfamily.

Its subcellular location is the membrane. It carries out the reaction S-ubiquitinyl-[E2 ubiquitin-conjugating enzyme]-L-cysteine + [acceptor protein]-L-lysine = [E2 ubiquitin-conjugating enzyme]-L-cysteine + N(6)-ubiquitinyl-[acceptor protein]-L-lysine.. It participates in protein modification; protein ubiquitination. This chain is RING-H2 finger protein ATL22 (ATL22), found in Arabidopsis thaliana (Mouse-ear cress).